Here is a 114-residue protein sequence, read N- to C-terminus: Large ribosomal subunit protein uL18 (114 aa).

Belongs to the universal ribosomal protein uL18 family. Part of the 50S ribosomal subunit; part of the 5S rRNA/L5/L18/L25 subcomplex. Contacts the 5S and 23S rRNAs.

Functionally, this is one of the proteins that bind and probably mediate the attachment of the 5S RNA into the large ribosomal subunit, where it forms part of the central protuberance. This chain is Large ribosomal subunit protein uL18, found in Bacteroides thetaiotaomicron (strain ATCC 29148 / DSM 2079 / JCM 5827 / CCUG 10774 / NCTC 10582 / VPI-5482 / E50).